Here is a 204-residue protein sequence, read N- to C-terminus: ATP-dependent Clp protease proteolytic subunit (204 aa).

The Nucleophile role is filled by serine 100. Residue histidine 125 is part of the active site.

It belongs to the peptidase S14 family. As to quaternary structure, fourteen ClpP subunits assemble into 2 heptameric rings which stack back to back to give a disk-like structure with a central cavity, resembling the structure of eukaryotic proteasomes.

It is found in the cytoplasm. It catalyses the reaction Hydrolysis of proteins to small peptides in the presence of ATP and magnesium. alpha-casein is the usual test substrate. In the absence of ATP, only oligopeptides shorter than five residues are hydrolyzed (such as succinyl-Leu-Tyr-|-NHMec, and Leu-Tyr-Leu-|-Tyr-Trp, in which cleavage of the -Tyr-|-Leu- and -Tyr-|-Trp bonds also occurs).. In terms of biological role, cleaves peptides in various proteins in a process that requires ATP hydrolysis. Has a chymotrypsin-like activity. Plays a major role in the degradation of misfolded proteins. The protein is ATP-dependent Clp protease proteolytic subunit of Anaeromyxobacter sp. (strain Fw109-5).